The following is a 175-amino-acid chain: Large ribosomal subunit protein uL10 (175 aa).

This sequence belongs to the universal ribosomal protein uL10 family. In terms of assembly, part of the ribosomal stalk of the 50S ribosomal subunit. The N-terminus interacts with L11 and the large rRNA to form the base of the stalk. The C-terminus forms an elongated spine to which L12 dimers bind in a sequential fashion forming a multimeric L10(L12)X complex.

In terms of biological role, forms part of the ribosomal stalk, playing a central role in the interaction of the ribosome with GTP-bound translation factors. The chain is Large ribosomal subunit protein uL10 from Synechococcus sp. (strain CC9605).